Consider the following 395-residue polypeptide: Tubulin-like protein CetZ1 (395 aa).

Residues 10–14 (QAGGK), 110–112 (GTG), Glu-142, Asn-169, and Asn-187 each bind GTP.

It belongs to the CetZ family.

Its subcellular location is the cytoplasm. In terms of biological role, involved in cell shape control. Essential for the development of a rod-shaped cell type required for efficient swimming. The sequence is that of Tubulin-like protein CetZ1 from Haloferax volcanii (strain ATCC 29605 / DSM 3757 / JCM 8879 / NBRC 14742 / NCIMB 2012 / VKM B-1768 / DS2) (Halobacterium volcanii).